A 295-amino-acid polypeptide reads, in one-letter code: Protoheme IX farnesyltransferase (295 aa).

Transmembrane regions (helical) follow at residues 8–28 (VTKP…FLLA), 35–55 (YTLF…GCVF), 84–104 (VSLV…WFGA), 107–127 (LACW…SLYM), 132–152 (VYGT…GYCA), 162–182 (LILL…IAIF), 208–228 (ITLY…GGYA), 233–253 (LVVA…GYKV), and 264–284 (FVFS…DFMV).

It belongs to the UbiA prenyltransferase family. Protoheme IX farnesyltransferase subfamily.

It is found in the cell inner membrane. The enzyme catalyses heme b + (2E,6E)-farnesyl diphosphate + H2O = Fe(II)-heme o + diphosphate. The protein operates within porphyrin-containing compound metabolism; heme O biosynthesis; heme O from protoheme: step 1/1. Functionally, converts heme B (protoheme IX) to heme O by substitution of the vinyl group on carbon 2 of heme B porphyrin ring with a hydroxyethyl farnesyl side group. This chain is Protoheme IX farnesyltransferase, found in Enterobacter sp. (strain 638).